Here is a 187-residue protein sequence, read N- to C-terminus: MRLRLLVSAGMLLVALSPCLPCRALLSRGSVSGAPRAPQPLNFLQPEQPQQPQPILIRMGEEYFLRLGNLNRSPAARLSPNSTPLTAGRGSRPSHDQAAANFFRVLLQQLQMPQRPLDSSTELAERGAEDALGGHQGALERERRSEEPPISLDLTFHLLREVLEMARAEQLAQQAHSNRKLMEIIGK.

The N-terminal stretch at 1–24 is a signal peptide; sequence MRLRLLVSAGMLLVALSPCLPCRA. The propeptide occupies 25-144; it reads LLSRGSVSGA…HQGALERERR (120 aa). The disordered stretch occupies residues 75–95; the sequence is AARLSPNSTPLTAGRGSRPSH. Position 185 is an isoleucine amide (Ile-185).

This sequence belongs to the sauvagine/corticotropin-releasing factor/urotensin I family. Interacts (via C-terminus) with CRFR1 (via N-terminal extracellular domain). In terms of tissue distribution, produced by the hypothalamus.

The protein localises to the secreted. Its function is as follows. Hormone regulating the release of corticotropin from pituitary gland. Induces NLRP6 in intestinal epithelial cells, hence may influence gut microbiota profile. In Rattus norvegicus (Rat), this protein is Corticoliberin (Crh).